Reading from the N-terminus, the 371-residue chain is Glycerate kinase (371 aa).

It belongs to the glycerate kinase type-1 family.

It catalyses the reaction (R)-glycerate + ATP = (2R)-3-phosphoglycerate + ADP + H(+). In Neisseria meningitidis serogroup B (strain ATCC BAA-335 / MC58), this protein is Glycerate kinase (glxK).